The primary structure comprises 465 residues: MAP kinase-interacting serine/threonine-protein kinase 1 (465 aa).

Over residues 1–11 (MVSSQKLEKPI) the composition is skewed to basic and acidic residues. The segment at 1 to 40 (MVSSQKLEKPIEMGSSEPLPIADGDRRRKKKRRGRATDSL) is disordered. At S39 the chain carries Phosphoserine. Residues 49–374 (KLTSELLGEG…AAQVLQHPWV (326 aa)) enclose the Protein kinase domain. Residues 55–63 (LGEGAYAKV) and K78 each bind ATP. The segment covering 185–203 (APTSLGSSDPPTSASQVAG) has biased composition (polar residues). Positions 185–204 (APTSLGSSDPPTSASQVAGT) are disordered. The active-site Proton acceptor is the D211. 2 positions are modified to phosphoserine: S221 and S226. A phosphothreonine mark is found at T250, T255, and T385. A disordered region spans residues 446-465 (RRRALAQAGRGEDRSPPTAL). Residues 455 to 465 (RGEDRSPPTAL) show a composition bias toward basic and acidic residues. Position 460 is a phosphoserine (S460).

The protein belongs to the protein kinase superfamily. CAMK Ser/Thr protein kinase family. As to quaternary structure, interacts with the C-terminal regions of EIF4G1 and EIF4G2. Also binds to dephosphorylated ERK1 and ERK2, and to the p38 kinases. The cofactor is Mg(2+). Post-translationally, dual phosphorylation of Thr-250 and Thr-255 activates the kinase. Phosphorylation of Thr-385 activates the kinase. MAPK3/ERK1 is one of the kinases which activate MKNK1/MNK1. Phosphorylation by PAK2 leads to a reduced phosphorylation of EIF4G1. As to expression, ubiquitous.

It localises to the cytoplasm. The protein resides in the nucleus. The catalysed reaction is L-seryl-[protein] + ATP = O-phospho-L-seryl-[protein] + ADP + H(+). It carries out the reaction L-threonyl-[protein] + ATP = O-phospho-L-threonyl-[protein] + ADP + H(+). Its activity is regulated as follows. Phosphorylated and activated by the p38 kinases and kinases in the Erk pathway. In terms of biological role, may play a role in the response to environmental stress and cytokines. Appears to regulate translation by phosphorylating EIF4E, thus increasing the affinity of this protein for the 7-methylguanosine-containing mRNA cap. The sequence is that of MAP kinase-interacting serine/threonine-protein kinase 1 (MKNK1) from Homo sapiens (Human).